The following is a 350-amino-acid chain: uncharacterized protein (350 aa).

Disordered regions lie at residues 1–21 (MDSFHPTPGKPTTATSNSSLN), 237–266 (NSDVIESSAEDSSNTDNPSTKPSNEMPISP), and 278–298 (EMSTPNSNHSRSRTPSSKKRT). Composition is skewed to polar residues over residues 10-21 (KPTTATSNSSLN) and 246-259 (EDSSNTDNPSTKPS). The span at 287–298 (SRSRTPSSKKRT) shows a compositional bias: basic residues.

The protein resides in the nucleus. This is an uncharacterized protein from Schizosaccharomyces pombe (strain 972 / ATCC 24843) (Fission yeast).